A 401-amino-acid polypeptide reads, in one-letter code: Decapping and exoribonuclease protein (401 aa).

Residues 1–27 are disordered; sequence MEGNKSMQREKIDRPMKRGPEQNSLSP. Residues 7–20 are compositionally biased toward basic and acidic residues; it reads MQREKIDRPMKRGP. Residues Arg69, Glu114, and 149 to 151 each bind substrate; that span reads WRG. Glu210 lines the Mg(2+) pocket. Substrate is bound by residues Cys235 and Glu252. Glu252, Asp254, Glu271, and Leu272 together coordinate Mg(2+). 2 residues coordinate substrate: Lys273 and Gln298.

The protein belongs to the DXO/Dom3Z family. The cofactor is Mg(2+).

Its subcellular location is the nucleus. The catalysed reaction is a 5'-end triphospho-ribonucleoside in mRNA + H2O = a 5'-end phospho-ribonucleoside in mRNA + diphosphate + H(+). The enzyme catalyses a 5'-end NAD(+)-phospho-ribonucleoside in mRNA + H2O = a 5'-end phospho-ribonucleoside in mRNA + NAD(+) + H(+). It carries out the reaction a 5'-end NAD(+)-phospho-ribonucleoside in snoRNA + H2O = a 5'-end phospho-ribonucleoside in snoRNA + NAD(+) + H(+). It catalyses the reaction a 5'-end (N(7)-methyl 5'-triphosphoguanosine)-ribonucleoside-ribonucleotide in mRNA + H2O = a (N(7)-methyl 5'-triphosphoguanosine)-nucleoside + a 5'-end phospho-ribonucleoside in mRNA + H(+). The catalysed reaction is a 5'-end FAD-phospho-ribonucleoside in mRNA + H2O = a 5'-end phospho-ribonucleoside in mRNA + FAD + H(+). The enzyme catalyses a 5'-end CoA-ribonucleoside in mRNA + H2O = 3'-dephospho-CoA + a 5'-end phospho-ribonucleoside in mRNA + H(+). Functionally, decapping enzyme for NAD-capped RNAs: specifically hydrolyzes the nicotinamide adenine dinucleotide (NAD) cap from a subset of RNAs by removing the entire NAD moiety from the 5'-end of an NAD-capped RNA. The NAD-cap is present at the 5'-end of some RNAs and snoRNAs. In contrast to the canonical 5'-end N7 methylguanosine (m7G) cap, the NAD cap promotes mRNA decay. Also acts as a non-canonical decapping enzyme that removes the entire cap structure of m7G capped or incompletely capped RNAs and mediates their subsequent degradation. Specifically degrades pre-mRNAs with a defective 5'-end m7G cap and is part of a pre-mRNA capping quality control. Has decapping activity toward incomplete 5'-end m7G cap mRNAs such as unmethylated 5'-end-capped RNA (cap0), while it has no activity toward 2'-O-ribose methylated m7G cap (cap1). Also has 5'-3' exoribonuclease activities: The 5'-end monophosphate RNA is then degraded by the 5'-3' exoribonuclease activity, enabling this enzyme to decap and degrade incompletely capped mRNAs. Also possesses RNA 5'-pyrophosphohydrolase activity by hydrolyzing the 5'-end triphosphate to release pyrophosphates. Exhibits decapping activity towards FAD-capped RNAs. Exhibits decapping activity towards dpCoA-capped RNAs in vitro. The polypeptide is Decapping and exoribonuclease protein (Xenopus laevis (African clawed frog)).